Reading from the N-terminus, the 103-residue chain is Small ribosomal subunit protein uS10 (103 aa).

It belongs to the universal ribosomal protein uS10 family. In terms of assembly, part of the 30S ribosomal subunit.

Involved in the binding of tRNA to the ribosomes. The chain is Small ribosomal subunit protein uS10 from Mycoplasmopsis pulmonis (strain UAB CTIP) (Mycoplasma pulmonis).